The sequence spans 23 residues: NADH-ubiquinone oxidoreductase 29 kDa subunit (23 aa).

As to quaternary structure, complex I is composed of about 45 different subunits.

The protein resides in the mitochondrion inner membrane. The catalysed reaction is a ubiquinone + NADH + 5 H(+)(in) = a ubiquinol + NAD(+) + 4 H(+)(out). Transfer of electrons from NADH to the respiratory chain. The immediate electron acceptor for the enzyme is believed to be ubiquinone. This is NADH-ubiquinone oxidoreductase 29 kDa subunit from Solanum tuberosum (Potato).